The primary structure comprises 304 residues: MSSNPSRSNSRSKNGDLESGLKFVDNDHDSKDIEARNRNHFYGFRAEPIYDQTERLANQVAELQEQQKRLFGPSGADFEPNIHRLRYINYGNPAPFGLSAFAFTTFLLSLFNVNAGHVKVSNMVTAPAAFYGGLAQLLASMWEMASGNTFGGAVFGSYGCFWLSYASIFIPWFNIQNSYDDPNDFNYAIGLYLICWFIFTFLVLLCTVRSTLAFFSLFMSLDVCFLLLACAFLRTSDGSPNVVLIRVGGAFGIFSACAAWYNAMAGLATIENSFFTVPRAIFPWSLEGLGPEEANRRRMMADDK.

Residues 1–12 (MSSNPSRSNSRS) are compositionally biased toward low complexity. Residues 1 to 23 (MSSNPSRSNSRSKNGDLESGLKF) form a disordered region. The next 6 membrane-spanning stretches (helical) occupy residues 93-113 (PAPF…LFNV), 123-143 (MVTA…SMWE), 150-170 (FGGA…SIFI), 188-208 (AIGL…LCTV), 212-232 (LAFF…ACAF), and 247-267 (VGGA…MAGL).

It belongs to the acetate uptake transporter (AceTr) (TC 2.A.96) family.

It localises to the endoplasmic reticulum membrane. The protein localises to the golgi apparatus. Its subcellular location is the golgi stack membrane. The protein resides in the vacuole membrane. Has a role in meiosis. The protein is Meiotically up-regulated gene 86 protein (mug86) of Schizosaccharomyces pombe (strain 972 / ATCC 24843) (Fission yeast).